A 291-amino-acid chain; its full sequence is Diaminopimelate epimerase (291 aa).

N17, Q50, and N70 together coordinate substrate. Catalysis depends on C79, which acts as the Proton donor. Substrate-binding positions include 80-81 (GN), N167, N200, and 218-219 (ER). Catalysis depends on C227, which acts as the Proton acceptor. Residue 228 to 229 (GS) participates in substrate binding.

The protein belongs to the diaminopimelate epimerase family. As to quaternary structure, homodimer.

The protein localises to the cytoplasm. The enzyme catalyses (2S,6S)-2,6-diaminopimelate = meso-2,6-diaminopimelate. Its pathway is amino-acid biosynthesis; L-lysine biosynthesis via DAP pathway; DL-2,6-diaminopimelate from LL-2,6-diaminopimelate: step 1/1. In terms of biological role, catalyzes the stereoinversion of LL-2,6-diaminopimelate (L,L-DAP) to meso-diaminopimelate (meso-DAP), a precursor of L-lysine and an essential component of the bacterial peptidoglycan. The protein is Diaminopimelate epimerase of Bradyrhizobium diazoefficiens (strain JCM 10833 / BCRC 13528 / IAM 13628 / NBRC 14792 / USDA 110).